An 848-amino-acid polypeptide reads, in one-letter code: Heat shock protein 70 homolog lhs1 (848 aa).

The first 21 residues, 1–21 (MKRSVLTIILFFSCQFWHAFA), serve as a signal peptide directing secretion. 11 N-linked (GlcNAc...) asparagine glycosylation sites follow: asparagine 134, asparagine 247, asparagine 359, asparagine 457, asparagine 462, asparagine 488, asparagine 555, asparagine 632, asparagine 678, asparagine 733, and asparagine 817. The interval 784-848 (KLKAKKGASS…QQEIDDSDEL (65 aa)) is disordered. 2 stretches are compositionally biased toward polar residues: residues 807 to 822 (TNDI…TSTQ) and 829 to 840 (ASVTQRPSSLQQ). Positions 845–848 (SDEL) match the Prevents secretion from ER motif.

The protein belongs to the heat shock protein 70 family.

Its subcellular location is the endoplasmic reticulum lumen. It carries out the reaction ATP + H2O = ADP + phosphate + H(+). Chaperone required for protein translocation and folding in the endoplasmic reticulum. In Schizosaccharomyces pombe (strain 972 / ATCC 24843) (Fission yeast), this protein is Heat shock protein 70 homolog lhs1.